Reading from the N-terminus, the 346-residue chain is MSQTESAAFLAGYPLKAHNTFGFDVRARFACRIEQEAQLMPAVRDPRAAGLPRLVLGGGSNVVLTGDFGGLVLLVALRGRRVVREDNDAWYVEAAGGEPWHEFVGWTLSQGMAGLENLALIPGTVGAAPIQNIGAYGLEMCERFASLRAVELTTGAVVELDAQACRFGYRDSFFKREGRDRFVITSVTFRLPKVWQPRAGYADLARELAANGHAGTPPTAQAIFDAVVAVRRAKLPDPLELGNAGSFFKNPVIGPAQFEALKLREPDVVSYVQADGRVKLAAGWLIDRCGWKGRAMGAAAVHERQALVLVNRGGASGAEVLALAKAIQRDVRERFGVELEPEPVCL.

Residues 22–194 (GFDVRARFAC…TSVTFRLPKV (173 aa)) form the FAD-binding PCMH-type domain. Arginine 170 is a catalytic residue. Catalysis depends on serine 246, which acts as the Proton donor. Glutamate 342 is a catalytic residue.

The protein belongs to the MurB family. It depends on FAD as a cofactor.

Its subcellular location is the cytoplasm. The enzyme catalyses UDP-N-acetyl-alpha-D-muramate + NADP(+) = UDP-N-acetyl-3-O-(1-carboxyvinyl)-alpha-D-glucosamine + NADPH + H(+). The protein operates within cell wall biogenesis; peptidoglycan biosynthesis. Cell wall formation. The polypeptide is UDP-N-acetylenolpyruvoylglucosamine reductase (Paraburkholderia xenovorans (strain LB400)).